A 233-amino-acid polypeptide reads, in one-letter code: Cysteine-rich venom protein (233 aa).

The signal sequence occupies residues 1–12 (PILAAVLQQSSG). The 129-residue stretch at 31–159 (VDLHNSLRRS…PYSYFFVCQY (129 aa)) folds into the SCP domain. 8 disulfides stabilise this stretch: C68–C146, C85–C160, C141–C157, C179–C186, C182–C191, C195–C228, C204–C222, and C213–C226. A ShKT domain is found at 195 to 228 (CTRENKFTNCNTMVQQSSCQDNYMKTNCPASCFC).

It belongs to the CRISP family. As to expression, expressed by the venom gland.

It is found in the secreted. Functionally, blocks contraction of smooth muscle elicited by high potassium-induced depolarization, but does not block caffeine-stimulated contraction. May target voltage-gated calcium channels on smooth muscle. The chain is Cysteine-rich venom protein from Trimeresurus stejnegeri (Chinese green tree viper).